The chain runs to 154 residues: uncharacterized protein (154 aa).

Coiled-coil stretches lie at residues 8–48 (DEEV…AIEA) and 89–138 (VQEL…RGLV).

This is an uncharacterized protein from Treponema pallidum (strain Nichols).